A 667-amino-acid polypeptide reads, in one-letter code: Bifunctional polymyxin resistance protein ArnA (667 aa).

The segment at 1 to 304 (MKAIVFAYHD…EMGIVTDVRL (304 aa)) is formyltransferase ArnAFT. His-104 functions as the Proton donor; for formyltransferase activity in the catalytic mechanism. (6R)-10-formyltetrahydrofolate is bound by residues Arg-114 and 136 to 140 (VKKAD). Positions 314–667 (RRTRVLILGV…TAAPKDELNA (354 aa)) are dehydrogenase ArnADH. NAD(+) contacts are provided by residues Asp-347 and 368 to 369 (DI). Residues Ala-393, Tyr-398, and 432 to 433 (TS) contribute to the UDP-alpha-D-glucuronate site. Catalysis depends on Glu-434, which acts as the Proton acceptor; for decarboxylase activity. Residues Arg-460, Asn-492, 526–535 (KLVDGGAQKR), and Tyr-613 contribute to the UDP-alpha-D-glucuronate site. Arg-619 acts as the Proton donor; for decarboxylase activity in catalysis.

It in the N-terminal section; belongs to the Fmt family. UDP-L-Ara4N formyltransferase subfamily. In the C-terminal section; belongs to the NAD(P)-dependent epimerase/dehydratase family. UDP-glucuronic acid decarboxylase subfamily. Homohexamer, formed by a dimer of trimers.

The catalysed reaction is UDP-alpha-D-glucuronate + NAD(+) = UDP-beta-L-threo-pentopyranos-4-ulose + CO2 + NADH. It catalyses the reaction UDP-4-amino-4-deoxy-beta-L-arabinose + (6R)-10-formyltetrahydrofolate = UDP-4-deoxy-4-formamido-beta-L-arabinose + (6S)-5,6,7,8-tetrahydrofolate + H(+). It participates in nucleotide-sugar biosynthesis; UDP-4-deoxy-4-formamido-beta-L-arabinose biosynthesis; UDP-4-deoxy-4-formamido-beta-L-arabinose from UDP-alpha-D-glucuronate: step 1/3. The protein operates within nucleotide-sugar biosynthesis; UDP-4-deoxy-4-formamido-beta-L-arabinose biosynthesis; UDP-4-deoxy-4-formamido-beta-L-arabinose from UDP-alpha-D-glucuronate: step 3/3. It functions in the pathway bacterial outer membrane biogenesis; lipopolysaccharide biosynthesis. In terms of biological role, bifunctional enzyme that catalyzes the oxidative decarboxylation of UDP-glucuronic acid (UDP-GlcUA) to UDP-4-keto-arabinose (UDP-Ara4O) and the addition of a formyl group to UDP-4-amino-4-deoxy-L-arabinose (UDP-L-Ara4N) to form UDP-L-4-formamido-arabinose (UDP-L-Ara4FN). The modified arabinose is attached to lipid A and is required for resistance to polymyxin and cationic antimicrobial peptides. The polypeptide is Bifunctional polymyxin resistance protein ArnA (Yersinia pseudotuberculosis serotype IB (strain PB1/+)).